The primary structure comprises 424 residues: MGYNIPRGTQDILPGESDRWQFVEQIMRDTCRTYQYKEIRTPIFEHTELFARGVGESTDIVQKEMYTFEDRKGRSLTLRPEGTAAAVRAFNENKLFANPVQPTKLYYVGPMFRYERPQTGRYRQFYQFGIEAIGSKDPAIDAEVMALAMSIYEKAGLENVKLVINSLGDQDSRKSYREALVKHFEPRIEEFCSDCQSRLHTNPLRILDCKKDRDHELMKSAPSILTYLNEESAAYFEKVKQYLNDLGISYEIDPNLVRGLDYYNHTAFEIMSNAEGFGAITTLAGGGRYDGLVEQIGGPEAPGIGFAMSIERLLAAIDAEKRELPVDKGIDCYIVTLGEKAKDYSVSLVYKLREAGISSEIDYENKKMKGQFKTADRLKARFIAILGEDELAQNKINVKDAQTGEQIEVALDEFIHVMKANQKG.

This sequence belongs to the class-II aminoacyl-tRNA synthetase family. In terms of assembly, homodimer.

The protein localises to the cytoplasm. The enzyme catalyses tRNA(His) + L-histidine + ATP = L-histidyl-tRNA(His) + AMP + diphosphate + H(+). The sequence is that of Histidine--tRNA ligase (hisS) from Bacillus subtilis (strain 168).